The sequence spans 1409 residues: DNA-directed RNA polymerase subunit beta' (1409 aa).

Residues cysteine 70, cysteine 72, cysteine 85, and cysteine 88 each contribute to the Zn(2+) site. Aspartate 458, aspartate 460, and aspartate 462 together coordinate Mg(2+). Residues cysteine 813, cysteine 887, cysteine 894, and cysteine 897 each coordinate Zn(2+).

The protein belongs to the RNA polymerase beta' chain family. The RNAP catalytic core consists of 2 alpha, 1 beta, 1 beta' and 1 omega subunit. When a sigma factor is associated with the core the holoenzyme is formed, which can initiate transcription. Mg(2+) is required as a cofactor. The cofactor is Zn(2+).

It carries out the reaction RNA(n) + a ribonucleoside 5'-triphosphate = RNA(n+1) + diphosphate. Functionally, DNA-dependent RNA polymerase catalyzes the transcription of DNA into RNA using the four ribonucleoside triphosphates as substrates. The protein is DNA-directed RNA polymerase subunit beta' of Acidovorax ebreus (strain TPSY) (Diaphorobacter sp. (strain TPSY)).